Consider the following 389-residue polypeptide: tRNA-specific 2-thiouridylase MnmA (389 aa).

ATP contacts are provided by residues 33-40 and Leu-59; that span reads GLSGGVDS. Residue Cys-120 is the Nucleophile of the active site. Cys-120 and Cys-219 form a disulfide bridge. Gly-145 is an ATP binding site. Residues 169 to 171 form an interaction with tRNA region; the sequence is KDQ. Catalysis depends on Cys-219, which acts as the Cysteine persulfide intermediate. Residues 326–327 form an interaction with tRNA region; sequence RY.

The protein belongs to the MnmA/TRMU family.

The protein localises to the cytoplasm. It catalyses the reaction S-sulfanyl-L-cysteinyl-[protein] + uridine(34) in tRNA + AH2 + ATP = 2-thiouridine(34) in tRNA + L-cysteinyl-[protein] + A + AMP + diphosphate + H(+). Its function is as follows. Catalyzes the 2-thiolation of uridine at the wobble position (U34) of tRNA, leading to the formation of s(2)U34. This Synechococcus sp. (strain WH7803) protein is tRNA-specific 2-thiouridylase MnmA.